Consider the following 122-residue polypeptide: Ribosome-binding factor A (122 aa).

Basic and acidic residues predominate over residues 95-111 (PTVERVTRIQRTLREVS). The segment at 95 to 122 (PTVERVTRIQRTLREVSGEDGDGNGTQE) is disordered.

This sequence belongs to the RbfA family. In terms of assembly, monomer. Binds 30S ribosomal subunits, but not 50S ribosomal subunits or 70S ribosomes.

Its subcellular location is the cytoplasm. In terms of biological role, one of several proteins that assist in the late maturation steps of the functional core of the 30S ribosomal subunit. Associates with free 30S ribosomal subunits (but not with 30S subunits that are part of 70S ribosomes or polysomes). Required for efficient processing of 16S rRNA. May interact with the 5'-terminal helix region of 16S rRNA. The chain is Ribosome-binding factor A from Rubrobacter xylanophilus (strain DSM 9941 / JCM 11954 / NBRC 16129 / PRD-1).